Consider the following 395-residue polypeptide: Leucine aminopeptidase 1 (395 aa).

The first 19 residues, 1–19 (MKHLSLLALAAVAPTTALA), serve as a signal peptide directing secretion. The propeptide occupies 20–95 (GVIDHQQVTF…SVKSFEQTKV (76 aa)). N-linked (GlcNAc...) asparagine glycosylation is present at Asn-187. Zn(2+) is bound by residues His-195, Asp-214, Glu-253, and Asp-280. Residues Cys-329 and Cys-333 are joined by a disulfide bond. His-362 contacts Zn(2+).

The protein belongs to the peptidase M28 family. M28E subfamily. Monomer. Zn(2+) serves as cofactor.

It is found in the secreted. Extracellular aminopeptidase that allows assimilation of proteinaceous substrates. In Uncinocarpus reesii (strain UAMH 1704), this protein is Leucine aminopeptidase 1 (LAP1).